The sequence spans 286 residues: MASLRELKGRIESTKKTKQITGAMQLVSASKMSKAEQNARGFVPYADKLQEVVSSIANANTDAQHPMLMKREVKKTGYLIITSDRGLVGAYNSHILKNLVNTIEKNHTSKDEYTIIVLGRKGYDYCRKRGLPVSKSVLGVPDHPTFADVKELASETVQMYADGDIDELNIIYNHYVSAISQVVTNKQLLPIDNLDESGAATSDYEFDPNQEQILEVLLPQYAESLIFGALLDGKASEHAASMTAMRSATDNASDLIDDLSLSYNRARQAAITQEITEIVGGVAALE.

The protein belongs to the ATPase gamma chain family. In terms of assembly, F-type ATPases have 2 components, CF(1) - the catalytic core - and CF(0) - the membrane proton channel. CF(1) has five subunits: alpha(3), beta(3), gamma(1), delta(1), epsilon(1). CF(0) has three main subunits: a, b and c.

It is found in the cell membrane. Functionally, produces ATP from ADP in the presence of a proton gradient across the membrane. The gamma chain is believed to be important in regulating ATPase activity and the flow of protons through the CF(0) complex. The polypeptide is ATP synthase gamma chain (Oceanobacillus iheyensis (strain DSM 14371 / CIP 107618 / JCM 11309 / KCTC 3954 / HTE831)).